The primary structure comprises 1770 residues: Transposon Ty2-OR2 Gag-Pol polyprotein (1770 aa).

2 disordered regions span residues 1-88 and 359-449; these read MESQ…YQQH and QHSE…SNDE. Polar residues-rich tracts occupy residues 19-39 and 49-60; these read ASVTSKEVPSNQDPLAVSASN and KVNSQEETTPGT. The RNA-binding stretch occupies residues 295–397; the sequence is ENNINVSDRL…SSKPRAAKAH (103 aa). Over residues 369–381 the composition is skewed to low complexity; the sequence is TSPNTTNTKVTTR. 2 stretches are compositionally biased toward polar residues: residues 399–408 and 415–435; these read IATSSKFSRV and ESTVSSQYLSDDNELSLGQQQ. Residue D457 is the For protease activity; shared with dimeric partner of the active site. An integrase-type zinc finger-like region spans residues 579 to 636; that stretch reads NVNKSKSVNKYPYPLIHRMLGHANFRSIQKSLKKNAVTYLKESDIEWSNASTYQCPDC. The region spanning 656–831 is the Integrase catalytic domain; it reads ESYEPFQYLH…AGLDITTILP (176 aa). Mg(2+) contacts are provided by D667 and D732. Disordered stretches follow at residues 1005–1038, 1057–1135, 1146–1165, and 1170–1205; these read GGTIESDTTSPRHSSTFTARNQKRPGSPNDMIDL, GGTE…KSSK, LPLPDLTHKSPTDTSDVSKD, and HSRQTNSSLGGMDDSNVLTTTKSKKRSLEDNETEIE. Composition is skewed to polar residues over residues 1009–1024 and 1065–1082; these read ESDTTSPRHSSTFTAR and QRNSDTNIKYRTTNSTPS. Residues 1151–1165 are compositionally biased toward basic and acidic residues; the sequence is LTHKSPTDTSDVSKD. Positions 1193 to 1227 match the Bipartite nuclear localization signal motif; it reads KKRSLEDNETEIEVSRDTWNNKNMRSLEPPRSKKR. In terms of domain architecture, Reverse transcriptase Ty1/copia-type spans 1353 to 1491; it reads NDYYITQLDI…DILGLEIKYQ (139 aa). Mg(2+) is bound by residues D1361, D1442, D1443, D1625, E1667, and D1700. The region spanning 1625 to 1767 is the RNase H Ty1/copia-type domain; that stretch reads DASYGNQPYY…IKTFKLLTNK (143 aa).

In terms of assembly, the capsid protein forms a homotrimer, from which the VLPs are assembled. The protease is a homodimer, whose active site consists of two apposed aspartic acid residues. Post-translationally, initially, virus-like particles (VLPs) are composed of the structural unprocessed proteins Gag and Gag-Pol, and also contain the host initiator methionine tRNA (tRNA(i)-Met) which serves as a primer for minus-strand DNA synthesis, and a dimer of genomic Ty RNA. Processing of the polyproteins occurs within the particle and proceeds by an ordered pathway, called maturation. First, the protease (PR) is released by autocatalytic cleavage of the Gag-Pol polyprotein, and this cleavage is a prerequisite for subsequent processing at the remaining sites to release the mature structural and catalytic proteins. Maturation takes place prior to the RT reaction and is required to produce transposition-competent VLPs.

It is found in the cytoplasm. It localises to the nucleus. The enzyme catalyses DNA(n) + a 2'-deoxyribonucleoside 5'-triphosphate = DNA(n+1) + diphosphate. It catalyses the reaction Endonucleolytic cleavage to 5'-phosphomonoester.. Functionally, capsid protein (CA) is the structural component of the virus-like particle (VLP), forming the shell that encapsulates the retrotransposons dimeric RNA genome. The particles are assembled from trimer-clustered units and there are holes in the capsid shells that allow for the diffusion of macromolecules. CA also has nucleocapsid-like chaperone activity, promoting primer tRNA(i)-Met annealing to the multipartite primer-binding site (PBS), dimerization of Ty2 RNA and initiation of reverse transcription. In terms of biological role, the aspartyl protease (PR) mediates the proteolytic cleavages of the Gag and Gag-Pol polyproteins after assembly of the VLP. Its function is as follows. Reverse transcriptase/ribonuclease H (RT) is a multifunctional enzyme that catalyzes the conversion of the retro-elements RNA genome into dsDNA within the VLP. The enzyme displays a DNA polymerase activity that can copy either DNA or RNA templates, and a ribonuclease H (RNase H) activity that cleaves the RNA strand of RNA-DNA heteroduplexes during plus-strand synthesis and hydrolyzes RNA primers. The conversion leads to a linear dsDNA copy of the retrotransposon that includes long terminal repeats (LTRs) at both ends. Integrase (IN) targets the VLP to the nucleus, where a subparticle preintegration complex (PIC) containing at least integrase and the newly synthesized dsDNA copy of the retrotransposon must transit the nuclear membrane. Once in the nucleus, integrase performs the integration of the dsDNA into the host genome. The polypeptide is Transposon Ty2-OR2 Gag-Pol polyprotein (TY2B-OR2) (Saccharomyces cerevisiae (strain ATCC 204508 / S288c) (Baker's yeast)).